The chain runs to 336 residues: uncharacterized protein (336 aa).

Disordered stretches follow at residues 29–93 and 116–147; these read GGVS…HSGA and LQER…GVTG. Polar residues-rich tracts occupy residues 70-82 and 125-141; these read SGGS…TSTA and PWRT…SQPH.

This is an uncharacterized protein from Bos taurus (Bovine).